We begin with the raw amino-acid sequence, 2349 residues long: Reducing polyketide synthase hmp8 (2349 aa).

The 427-residue stretch at 9–435 (HVPVAIIGLA…GTNGHVVLEA (427 aa)) folds into the Ketosynthase family 3 (KS3) domain. Active-site for beta-ketoacyl synthase activity residues include cysteine 182, histidine 317, and histidine 357. Residues 551–856 (FVFTGQGAQW…SHNGIKNVAY (306 aa)) form a malonyl-CoA:ACP transacylase (MAT) domain region. The N-terminal hotdog fold stretch occupies residues 930–1066 (RSLIGAPVPM…GLVAIDYEES (137 aa)). Positions 930–1250 (RSLIGAPVPM…TSELDMDSGK (321 aa)) constitute a PKS/mFAS DH domain. The segment at 932-1244 (LIGAPVPMMA…SVKDFRTSEL (313 aa)) is dehydratase (DH) domain. The active-site Proton acceptor; for dehydratase activity is histidine 962. The segment at 1094-1250 (PEHYAHDKFY…TSELDMDSGK (157 aa)) is C-terminal hotdog fold. Aspartate 1160 serves as the catalytic Proton donor; for dehydratase activity. The tract at residues 1641-1953 (GLLDTLKFVP…QGKHRGKMVL (313 aa)) is enoyl reductase (ER) domain. The ketoreductase (KR) domain stretch occupies residues 1977 to 2157 (ATYLFVGGLG…ISVNLGIMRD (181 aa)). The Carrier domain occupies 2267–2344 (EAAEIITDAL…SFAVKIAEKS (78 aa)). Serine 2304 is modified (O-(pantetheine 4'-phosphoryl)serine).

Its pathway is secondary metabolite biosynthesis. In terms of biological role, reducing polyketide synthase; part of the gene cluster that mediates the biosynthesis of hypothemycin, a resorcylic acid lactone (RAL) that irreversibly inhibits a subset of protein kinases with a conserved cysteine in the ATP binding site such as human ERK2. The first step is performed by both PKSs hmp3 and hmp8 and leads to the production of 7',8'-dehydrozearalenol (DHZ). The highly reducing PKS hpm8 synthesizes the reduced hexaketide (7S,11S,2E,8E)-7,11-dihydroxy-dodeca-2,8-dienoate, which is transferred downstream to the non-reducing PKS hpm3. Hpm3 then extends the reduced hexaketide to a nonaketide, after which regioselective cyclization and macrolactonization affords DHZ. The next step is the conversion of DHZ into aigialomycin C and is performed by the O-methyltransferase hmp5, the FAD-binding monooxygenase hmp7, and the cytochrome P450 monooxygenase hmp1. The wide substrate tolerance of the hmp5 and hmp7 implies that the reactions from DHZ to aigialomycin C can occur in any order. The steps from aigialomycin C to hypothemycin are less well established. The FAD-linked oxidoreductase hmp9 presumably catalyzes oxidation of the C-6' hydroxyl to a ketone. The timing of this oxidation is important, since the resulting enone functional group is a Michael acceptor that can react spontaneously with glutathione, an abundant metabolite in fungal cells. The glutathione S-transferase hmp2 catalyzes cis-trans isomerization of the 7',8' double bond with equilibrium favoring the trans isomer. The hpm6-encoded transporter might preferentially pump hypothemycin out of the cell relative to the trans isomer aigialomycin A. The cis-to-trans isomerization may be coupled with C-4' hydroxylation, since all known hypothemycin analogs containing the enone functional group also have hydroxyl groups at both C-4' and C-5'. The sequence is that of Reducing polyketide synthase hmp8 from Hypomyces subiculosus (Nectria subiculosa).